Here is a 2528-residue protein sequence, read N- to C-terminus: Squalestatin tetraketide synthase clz2 (2528 aa).

The Ketosynthase family 3 (KS3) domain occupies T14–S409. Active-site for beta-ketoacyl synthase activity residues include C187, H291, and H331. The disordered stretch occupies residues V420–T457. Over residues A436–G452 the composition is skewed to low complexity. The malonyl-CoA:ACP transacylase (MAT) domain stretch occupies residues G538–Q856. The tract at residues H925 to S1063 is N-terminal hotdog fold. In terms of domain architecture, PKS/mFAS DH spans H925–Q1239. Positions H925–Q1239 are dehydratase (DH) domain. Residue H957 is the Proton acceptor; for dehydratase activity of the active site. A C-terminal hotdog fold region spans residues T1083–Q1239. The active-site Proton donor; for dehydratase activity is the D1148. Positions L1390–D1590 are methyltransferase (CMet) domain. The enoyl reductase (ER) (ER) domain stretch occupies residues G1817–I2130. The interval A2153 to Q2331 is ketoreductase (KR) domain. The tract at residues R2408 to G2430 is disordered. One can recognise a Carrier domain in the interval E2441–S2518. The residue at position 2478 (S2478) is an O-(pantetheine 4'-phosphoryl)serine.

Its pathway is secondary metabolite biosynthesis. In terms of biological role, highly reducing polyketide synthase (HR-PKS); part of the gene cluster that mediates the biosynthesis of squalestatin S1 (SQS1, also known as zaragozic acid A), a heavily oxidized fungal polyketide that offers potent cholesterol lowering activity by targeting squalene synthase (SS). SQS1 is composed of a 2,8-dioxobicyclic[3.2.1]octane-3,4,5-tricarboxyclic acid core that is connected to two lipophilic polyketide arms. These initial steps feature the priming of an unusual benzoic acid starter unit onto the highly reducing polyketide synthase clz14, followed by oxaloacetate extension and product release to generate a tricarboxylic acid containing product. The phenylalanine ammonia lyase (PAL) clz10 and the acyl-CoA ligase clz12 are involved in transforming phenylalanine into benzoyl-CoA. The citrate synthase-like protein clz17 is involved in connecting the C-alpha-carbons of the hexaketide chain and oxaloacetate to afford the tricarboxylic acid unit. The potential hydrolytic enzymes, clz11 and clz13, are in close proximity to pks2 and may participate in product release. On the other side, the tetraketide arm is synthesized by a the squalestatin tetraketide synthase clz2 and enzymatically esterified to the core in the last biosynthetic step, by the acetyltransferase clz6. The biosynthesis of the tetraketide must involve 3 rounds of chain extension. After the first and second rounds methyl-transfer occurs, and in all rounds of extension the ketoreductase and dehydratase are active. The enoyl reductase and C-MeT of clz2 are not active in the final round of extension. The acetyltransferase clz6 appears to have a broad substrate selectivity for its acyl CoA substrate, allowing the in vitro synthesis of novel squalestatins. The biosynthesis of SQS1 requires several oxidative steps likely performed by oxidoreductases clz3, clz15 and clz16. Finally, in support of the identification of the cluster as being responsible for SQS1 production, the cluster contains a gene encoding a putative squalene synthase (SS) clz20, suggesting a likely mechanism for self-resistance. The polypeptide is Squalestatin tetraketide synthase clz2 (Cochliobolus lunatus (Filamentous fungus)).